We begin with the raw amino-acid sequence, 232 residues long: MGQKVHPNGIRLGIVKPWNATWFASSQEFADNLDGDFKVRQYLTKELKKASLSRIVIERPAKSIRVTIHTARPGVVIGKKGEDVEKLRAGVAKIAGVPAQINIAEVRKPELDAHLVADSIASQLERRVMFRRAMKRAVQNAMRLGAQGIKVQVGGRLGGAEIARSEWYREGRVPLHTLRADIDYATASAHTQYGVIGVKVWIFKGEVLGGMPAANAVEPKADKPKKQRRSRK.

The 69-residue stretch at 39–107 (VRQYLTKELK…PAQINIAEVR (69 aa)) folds into the KH type-2 domain.

The protein belongs to the universal ribosomal protein uS3 family. In terms of assembly, part of the 30S ribosomal subunit. Forms a tight complex with proteins S10 and S14.

In terms of biological role, binds the lower part of the 30S subunit head. Binds mRNA in the 70S ribosome, positioning it for translation. This chain is Small ribosomal subunit protein uS3, found in Aliivibrio salmonicida (strain LFI1238) (Vibrio salmonicida (strain LFI1238)).